Consider the following 723-residue polypeptide: Transmembrane channel-like protein 7 (723 aa).

Disordered regions lie at residues 1 to 28 (MSES…LSLD) and 51 to 71 (RRRT…KPTD). The Extracellular portion of the chain corresponds to 1–168 (MSESSGSALQ…GIQSYFSFLR (168 aa)). An N-linked (GlcNAc...) asparagine glycan is attached at Asn24. N-linked (GlcNAc...) asparagine glycosylation is present at Asn84. Position 89 is a phosphoserine (Ser89). Asn96 is a glycosylation site (N-linked (GlcNAc...) asparagine). A helical transmembrane segment spans residues 169–189 (FLVLLNLVIFLIIFMLVLLPV). Topologically, residues 190–219 (LLTKYKITNSSFVLIPFKDMDKQCTVYPVS) are cytoplasmic. A helical membrane pass occupies residues 220 to 240 (SSGLIYFYSYIIDLLSGTGFL). At 241–263 (EETSLFYGHYTIDGVKFQNFTYD) the chain is on the extracellular side. N-linked (GlcNAc...) asparagine glycosylation is present at Asn259. A helical transmembrane segment spans residues 264-284 (LPLAYLLSTIASLALSLLWIV). The Cytoplasmic portion of the chain corresponds to 285–362 (KRSVEGFKIN…EETIRIYSLR (78 aa)). The chain crosses the membrane as a helical span at residues 363-383 (LFLNCIVLAVLGACFYAIYVA). Over 384 to 404 (TVFSQEHMKKEIDKMVFGENL) the chain is Extracellular. A helical transmembrane segment spans residues 405–425 (FILYLPSIVITLANFITPMIF). Residues 426-494 (AKIIRYEDYS…PCWETQVGQE (69 aa)) are Cytoplasmic-facing. The chain crosses the membrane as a helical span at residues 495–515 (MYKLMIFDFIIILAVTLFVDF). The Extracellular segment spans residues 516–555 (PRKLLVTYCSSCKLIQCWGQQEFAIPDNVLGIVYGQTICW). Residues 556-576 (IGAFFSPLLPAIATLKFIIIF) form a helical membrane-spanning segment. Topologically, residues 577-601 (YVKEWSLLYTCRPSPRPFRASNSNF) are cytoplasmic. A helical membrane pass occupies residues 602 to 622 (FFLLVLLIGLCLAIIPLTISI). The Extracellular segment spans residues 623-665 (SRIPSSKACGPFTNFNTTWEVIPKTVSTFPSSLQSFIHGVTSE). A glycan (N-linked (GlcNAc...) asparagine) is linked at Asn638. The chain crosses the membrane as a helical span at residues 666–686 (AFAVPFFMIICLIMFYFIALA). Residues 687–723 (GAHKRVVIQLREQLSLESRDKCYLIQKLTEAQRDMRN) are Cytoplasmic-facing.

It belongs to the TMC family. Interacts with PIEZO2; the interaction inhibits PIEZO2-conducted mechanically activated currents.

It localises to the membrane. In terms of biological role, acts as an inhibitory modulator of PIEZO2 mechanosensitive channel in dorsal root ganglion (DRG) neurons through physical interactions or interference with the interaction between PIEZO2 and the cytoskeleton. This Homo sapiens (Human) protein is Transmembrane channel-like protein 7.